Consider the following 78-residue polypeptide: HssA/B-like protein 30 (78 aa).

Positions Met1–Gly32 are disordered.

The protein belongs to the hssA/B family.

This Dictyostelium discoideum (Social amoeba) protein is HssA/B-like protein 30 (hssl30).